We begin with the raw amino-acid sequence, 113 residues long: Large ribosomal subunit protein bL19 (113 aa).

This sequence belongs to the bacterial ribosomal protein bL19 family.

In terms of biological role, this protein is located at the 30S-50S ribosomal subunit interface and may play a role in the structure and function of the aminoacyl-tRNA binding site. This chain is Large ribosomal subunit protein bL19, found in Mycobacteroides abscessus (strain ATCC 19977 / DSM 44196 / CCUG 20993 / CIP 104536 / JCM 13569 / NCTC 13031 / TMC 1543 / L948) (Mycobacterium abscessus).